Reading from the N-terminus, the 114-residue chain is MGLTNEKLASLIKKELALIINVSIRNNKIGFINVTEVKLTNDLSFANVYYVILNNQPEFLSLAAEIIEKNKSTIRMLLAKKIRNIRKIPELVFIYDTSLEYGNHIDNILKGINK.

The protein belongs to the RbfA family. As to quaternary structure, monomer. Binds 30S ribosomal subunits, but not 50S ribosomal subunits or 70S ribosomes.

The protein resides in the cytoplasm. Functionally, one of several proteins that assist in the late maturation steps of the functional core of the 30S ribosomal subunit. Associates with free 30S ribosomal subunits (but not with 30S subunits that are part of 70S ribosomes or polysomes). Required for efficient processing of 16S rRNA. May interact with the 5'-terminal helix region of 16S rRNA. The polypeptide is Ribosome-binding factor A (Phytoplasma mali (strain AT)).